Here is a 668-residue protein sequence, read N- to C-terminus: Packaging protein UL32 homolog (668 aa).

Positions 1–10 (MNPSTHVSSN) are enriched in polar residues. A disordered region spans residues 1-35 (MNPSTHVSSNGPTTPPHGPHTTFLPPTSPAPSTSS). A compositionally biased stretch (low complexity) spans 19 to 35 (PHTTFLPPTSPAPSTSS). Zn(2+)-binding residues include Cys-200, Cys-203, His-276, and Cys-282. A zinc finger 1 region spans residues 200 to 282 (CNLCAIISIC…FHLHFFINRC (83 aa)). Composition is skewed to basic and acidic residues over residues 392-401 (SEREDARMMM) and 410-419 (GEKGGDDPGR). The segment at 392-430 (SEREDARMMMEEEEDEEGGEKGGDDPGRHNGGGTSGGFS) is disordered. Positions 459, 462, 567, and 574 each coordinate Zn(2+). Positions 459–574 (CLLCELMACS…YKHFFCDPQC (116 aa)) are zinc finger 2.

Belongs to the herpesviridae UL32 protein family.

The protein resides in the host cytoplasm. It localises to the host nucleus. Functionally, plays a role in efficient localization of neo-synthesized capsids to nuclear replication compartments, thereby controlling cleavage and packaging of virus genomic DNA. In Homo sapiens (Human), this protein is Packaging protein UL32 homolog (UL52).